The primary structure comprises 356 residues: Glutamate 5-kinase (356 aa).

Lys6 lines the ATP pocket. The substrate site is built by Ser46, Asp135, and Asn147. 202 to 208 (TGGMRSK) contacts ATP. One can recognise a PUA domain in the interval 265 to 342 (KGIIVVDRGA…SEVRKLLNTT (78 aa)).

It belongs to the glutamate 5-kinase family.

It is found in the cytoplasm. It carries out the reaction L-glutamate + ATP = L-glutamyl 5-phosphate + ADP. It functions in the pathway amino-acid biosynthesis; L-proline biosynthesis; L-glutamate 5-semialdehyde from L-glutamate: step 1/2. In terms of biological role, catalyzes the transfer of a phosphate group to glutamate to form L-glutamate 5-phosphate. This is Glutamate 5-kinase from Aquifex aeolicus (strain VF5).